The primary structure comprises 162 residues: Caveolin-2 (162 aa).

The Cytoplasmic portion of the chain corresponds to 1–86 (MGLEKEKLEC…FELVKFIFYR (86 aa)). Positions 87–107 (LLTTLLAVPAAFILGVVFGVL) form an intramembrane region, helical. Topologically, residues 108–162 (SCIHIWLVMPVTRSFLMLLPSIQVVWKSVTDMFITPLFHSMGRSLSSIQVRTSDT) are cytoplasmic.

This sequence belongs to the caveolin family. In terms of assembly, homooligomer.

Its subcellular location is the golgi apparatus membrane. The protein localises to the cell membrane. It localises to the membrane. The protein resides in the caveola. May act as a scaffolding protein within caveolar membranes. Interacts directly with G-protein alpha subunits and can functionally regulate their activity. The sequence is that of Caveolin-2 (cav2) from Takifugu rubripes (Japanese pufferfish).